The sequence spans 89 residues: Large ribosomal subunit protein bL27 (89 aa).

It belongs to the bacterial ribosomal protein bL27 family.

This Cereibacter sphaeroides (strain ATCC 17029 / ATH 2.4.9) (Rhodobacter sphaeroides) protein is Large ribosomal subunit protein bL27.